The chain runs to 387 residues: Protein MGF 360-4L (387 aa).

The protein belongs to the asfivirus MGF 360 family.

Its function is as follows. Plays a role in virus cell tropism, and may be required for efficient virus replication in macrophages. This is Protein MGF 360-4L from Ornithodoros (relapsing fever ticks).